The primary structure comprises 226 residues: GTP-binding nuclear protein Ran-3 (226 aa).

Residues 14-178 form the Small GTPase Ran-type domain; the sequence is GYPSFKLILV…LYLARKLTGD (165 aa). 25–32 contacts GTP; that stretch reads DGGTGKTT. Residues 44–52 form a switch-I region; that stretch reads KRYEPTIGV. GTP contacts are provided by residues G75, 129–132, and 157–159; these read NKVD and SAK. The interval 75–91 is switch-II; that stretch reads GQEKFGGLRDGYYIHGH.

This sequence belongs to the small GTPase superfamily. Ran family. As to quaternary structure, found in a nuclear export complex with RanGTP, exportin and pre-miRNA.

The protein resides in the nucleus. Its function is as follows. GTP-binding protein involved in nucleocytoplasmic transport. Required for the import of protein into the nucleus and also for RNA export. Involved in chromatin condensation and control of cell cycle. The chain is GTP-binding nuclear protein Ran-3 (RAN3) from Oryza sativa subsp. indica (Rice).